Here is a 123-residue protein sequence, read N- to C-terminus: uncharacterized protein (123 aa).

The tract at residues 35–100 (SQDHGDDPAE…SSGAPASQHC (66 aa)) is disordered. The segment covering 37 to 48 (DHGDDPAERGRT) has biased composition (basic and acidic residues). Positions 85–97 (ALPASPSSGAPAS) are enriched in low complexity.

This is an uncharacterized protein from Homo sapiens (Human).